Consider the following 514-residue polypeptide: MPLELTQSRVQKIWVPVDHRPSLPRSCGPKLTNSPTVIVMVGLPARGKTYISKKLTRYLNWIGVPTKVFNVGEYRREAVKQYSSYNFFRPDNEEAMKVRKQCALAALRDVKSYLAKEGGQIAVFDATNTTRERRHMILHFAKENDFKAFFIESVCDDPTVVASNIMEVKISSPDYKDCNSAEAMDDFMKRISCYEASYQPLDPDKCDRDLSLIKVIDVGRRFLVNRVQDHIQSRIVYYLMNIHVQPRTIYLCRHGENEHNLQGRIGGDSGLSSRGKKFASALSKFVEEQNLKDLRVWTSQLKSTIQTAEALRLPYEQWKALNEIDAGVCEELTYEEIRDTYPEEYALREQDKYYYRYPTGESYQDLVQRLEPVIMELERQENVLVICHQAVLRCLLAYFLDKSAEEMPYLKCPLHTVLKLTPVAYGCRVESIYLNVESVCTHRERSEDAKKGPNPLMRRNSVTPLASPEPTKKPRINSFEEHVASTSAALPSCLPPEVPTQLPGQPLLGQACLT.

Residues 1–245 (MPLELTQSRV…VYYLMNIHVQ (245 aa)) are 6-phosphofructo-2-kinase. An ATP-binding site is contributed by 42–50 (GLPARGKTY). Beta-D-fructose 6-phosphate contacts are provided by Arg75 and Arg99. The active site involves Asp125. Thr127 and Arg133 together coordinate beta-D-fructose 6-phosphate. Residue Cys155 is part of the active site. 164–169 (NIMEVK) is an ATP binding site. Residues Lys169, Arg190, and Tyr194 each contribute to the beta-D-fructose 6-phosphate site. A fructose-2,6-bisphosphatase region spans residues 246–514 (PRTIYLCRHG…QPLLGQACLT (269 aa)). Beta-D-fructose 2,6-bisphosphate is bound at residue Arg253. The active-site Tele-phosphohistidine intermediate is the His254. Beta-D-fructose 2,6-bisphosphate contacts are provided by Asn260 and Gly266. Glu323 functions as the Proton donor/acceptor in the catalytic mechanism. Residues Tyr334, Arg348, Lys352, Tyr363, Gln389, and Arg393 each contribute to the beta-D-fructose 2,6-bisphosphate site. An ATP-binding site is contributed by 345-348 (YALR). Residues 389–393 (QAVLR) and Tyr425 each bind ATP. Residues 444–475 (ERSEDAKKGPNPLMRRNSVTPLASPEPTKKPR) are disordered. Ser461 is modified (phosphoserine; by AMPK and PKA). Phosphothreonine is present on Thr463. Ser467 is subject to Phosphoserine. Thr471 is subject to Phosphothreonine; by PKC.

This sequence in the C-terminal section; belongs to the phosphoglycerate mutase family. Homodimer. Forms a heterodimer with PFKFB2. In terms of processing, phosphorylation by AMPK stimulates activity.

It catalyses the reaction beta-D-fructose 2,6-bisphosphate + H2O = beta-D-fructose 6-phosphate + phosphate. The catalysed reaction is beta-D-fructose 6-phosphate + ATP = beta-D-fructose 2,6-bisphosphate + ADP + H(+). Functionally, catalyzes both the synthesis and degradation of fructose 2,6-bisphosphate. In Pongo abelii (Sumatran orangutan), this protein is 6-phosphofructo-2-kinase/fructose-2,6-bisphosphatase 3 (PFKFB3).